We begin with the raw amino-acid sequence, 236 residues long: Peptidase E (236 aa).

Active-site charge relay system residues include serine 122, aspartate 137, and histidine 159.

Belongs to the peptidase S51 family.

The protein localises to the cytoplasm. The enzyme catalyses Dipeptidase E catalyzes the hydrolysis of dipeptides Asp-|-Xaa. It does not act on peptides with N-terminal Glu, Asn or Gln, nor does it cleave isoaspartyl peptides.. In terms of biological role, hydrolyzes dipeptides containing N-terminal aspartate residues. May play a role in allowing the cell to use peptide aspartate to spare carbon otherwise required for the synthesis of the aspartate family of amino acids. In Shewanella sp. (strain ANA-3), this protein is Peptidase E.